Consider the following 675-residue polypeptide: Putative L-type lectin-domain containing receptor kinase I.11 (675 aa).

Positions 1-22 (MASERLHLILLVFFNHLTFLLS) are cleaved as a signal peptide. The Extracellular segment spans residues 23–292 (QQEEAGFIYN…PKAKQEQTSP (270 aa)). The segment at 27–263 (AGFIYNGFGQ…YQYILGWSFS (237 aa)) is legume-lectin like. N-linked (GlcNAc...) asparagine glycosylation is found at N60, N129, N186, N209, and N230. A helical membrane pass occupies residues 293–313 (LLIVLLMLLVLIMLAVLGGIY). The Cytoplasmic segment spans residues 314 to 675 (LYRRKKYAEV…THTITYGDGR (362 aa)). Positions 348 to 620 (FDKDGRLGKG…QVIQYINQNL (273 aa)) constitute a Protein kinase domain. Residues 354-362 (LGKGGFGEV) and K376 contribute to the ATP site. Residue D472 is the Proton acceptor of the active site.

The protein in the C-terminal section; belongs to the protein kinase superfamily. Ser/Thr protein kinase family. In the N-terminal section; belongs to the leguminous lectin family.

The protein resides in the cell membrane. The enzyme catalyses L-seryl-[protein] + ATP = O-phospho-L-seryl-[protein] + ADP + H(+). It carries out the reaction L-threonyl-[protein] + ATP = O-phospho-L-threonyl-[protein] + ADP + H(+). In Arabidopsis thaliana (Mouse-ear cress), this protein is Putative L-type lectin-domain containing receptor kinase I.11 (LECRK111).